Reading from the N-terminus, the 170-residue chain is Transcriptional repressor NrdR (170 aa).

Residues 3-34 (CPFCGTQDTKVVDSRLVSEGAQVRRRRTCIHC) fold into a zinc finger. An ATP-cone domain is found at 49-139 (PKLIKSDGSR…VYRSFKDISE (91 aa)). The segment at 151-170 (SVSIPKSKKTAPESKKEDQA) is disordered. Residues 160–170 (TAPESKKEDQA) are compositionally biased toward basic and acidic residues.

This sequence belongs to the NrdR family. Zn(2+) is required as a cofactor.

Functionally, negatively regulates transcription of bacterial ribonucleotide reductase nrd genes and operons by binding to NrdR-boxes. This is Transcriptional repressor NrdR from Marinomonas sp. (strain MWYL1).